A 570-amino-acid polypeptide reads, in one-letter code: Proline--tRNA ligase (570 aa).

It belongs to the class-II aminoacyl-tRNA synthetase family. ProS type 1 subfamily. As to quaternary structure, homodimer.

Its subcellular location is the cytoplasm. The enzyme catalyses tRNA(Pro) + L-proline + ATP = L-prolyl-tRNA(Pro) + AMP + diphosphate. Catalyzes the attachment of proline to tRNA(Pro) in a two-step reaction: proline is first activated by ATP to form Pro-AMP and then transferred to the acceptor end of tRNA(Pro). As ProRS can inadvertently accommodate and process non-cognate amino acids such as alanine and cysteine, to avoid such errors it has two additional distinct editing activities against alanine. One activity is designated as 'pretransfer' editing and involves the tRNA(Pro)-independent hydrolysis of activated Ala-AMP. The other activity is designated 'posttransfer' editing and involves deacylation of mischarged Ala-tRNA(Pro). The misacylated Cys-tRNA(Pro) is not edited by ProRS. This chain is Proline--tRNA ligase, found in Thermoanaerobacter pseudethanolicus (strain ATCC 33223 / 39E) (Clostridium thermohydrosulfuricum).